Here is a 181-residue protein sequence, read N- to C-terminus: Inner membrane-spanning protein YciB (181 aa).

5 helical membrane passes run 10–30 (LIIFFAVYKFFDIYIASGALI), 50–70 (MHLITFAMVTVFGTLTLVFHD), 72–92 (AFIKWKVTIIYALFALALGVS), 118–138 (VTWYWVSFFAICGLVNIYVAF), and 148–168 (FKVFGLTALTLINTVITVFYL).

It belongs to the YciB family.

The protein resides in the cell inner membrane. Functionally, plays a role in cell envelope biogenesis, maintenance of cell envelope integrity and membrane homeostasis. This is Inner membrane-spanning protein YciB from Shewanella sp. (strain MR-7).